Reading from the N-terminus, the 361-residue chain is Peptide chain release factor 1 (361 aa).

Position 237 is an N5-methylglutamine (glutamine 237). A compositionally biased stretch (basic and acidic residues) spans 285–296 (DEKRRSAEESTR). The segment at 285-305 (DEKRRSAEESTRRNLVGSGDR) is disordered.

Belongs to the prokaryotic/mitochondrial release factor family. Post-translationally, methylated by PrmC. Methylation increases the termination efficiency of RF1.

Its subcellular location is the cytoplasm. Its function is as follows. Peptide chain release factor 1 directs the termination of translation in response to the peptide chain termination codons UAG and UAA. The polypeptide is Peptide chain release factor 1 (Shewanella sediminis (strain HAW-EB3)).